Here is a 168-residue protein sequence, read N- to C-terminus: NADH-quinone oxidoreductase subunit B (168 aa).

C49, C50, C114, and C144 together coordinate [4Fe-4S] cluster.

Belongs to the complex I 20 kDa subunit family. As to quaternary structure, NDH-1 is composed of 14 different subunits. Subunits NuoB, C, D, E, F, and G constitute the peripheral sector of the complex. The cofactor is [4Fe-4S] cluster.

It is found in the cell membrane. It carries out the reaction a quinone + NADH + 5 H(+)(in) = a quinol + NAD(+) + 4 H(+)(out). In terms of biological role, NDH-1 shuttles electrons from NADH, via FMN and iron-sulfur (Fe-S) centers, to quinones in the respiratory chain. Couples the redox reaction to proton translocation (for every two electrons transferred, four hydrogen ions are translocated across the cytoplasmic membrane), and thus conserves the redox energy in a proton gradient. The chain is NADH-quinone oxidoreductase subunit B from Wolbachia sp. subsp. Brugia malayi (strain TRS).